The following is a 518-amino-acid chain: Protein translocase subunit SecD (518 aa).

6 consecutive transmembrane segments (helical) span residues 9–29 (IVLS…NFIQ), 356–376 (GKKA…LSYG), 377–397 (VIGL…LALL), 406–426 (LPGI…NVLI), 451–473 (AFAT…YIFG), and 486–506 (IGII…IDIW).

Belongs to the SecD/SecF family. SecD subfamily. In terms of assembly, forms a complex with SecF. Part of the essential Sec protein translocation apparatus which comprises SecA, SecYEG and auxiliary proteins SecDF-YajC and YidC.

The protein resides in the cell inner membrane. Part of the Sec protein translocase complex. Interacts with the SecYEG preprotein conducting channel. SecDF uses the proton motive force (PMF) to complete protein translocation after the ATP-dependent function of SecA. The sequence is that of Protein translocase subunit SecD from Rickettsia typhi (strain ATCC VR-144 / Wilmington).